Reading from the N-terminus, the 243-residue chain is Nuclear cap-binding protein subunit 2 (243 aa).

MRNA-binding positions include Y14, Y37, 106 to 110 (RVDFD), 117 to 121 (RQWGR), and 127 to 128 (QV). The RRM domain maps to 34 to 112 (VTVYVGNMSF…RPIRVDFDWG (79 aa)). 2 disordered regions span residues 120–144 (GRGRSGGQVRDEYRTDYDPGRGGYG) and 161–243 (GGAF…RRRR). Composition is skewed to basic and acidic residues over residues 128–138 (VRDEYRTDYDP) and 173–228 (DRGD…REKG).

The protein belongs to the RRM NCBP2 family. As to quaternary structure, component of the nuclear cap-binding complex (CBC), a heterodimer composed of ABH1/CBP80 and CBP20 that interacts with m7GpppG-capped RNA.

The protein resides in the nucleus. It localises to the cytoplasm. Its function is as follows. Component of the cap-binding complex (CBC), which binds co-transcriptionally to the 5' cap of pre-mRNAs and is involved in various processes such as pre-mRNA splicing and RNA-mediated gene silencing (RNAi) by microRNAs (miRNAs). The CBC complex is involved in miRNA-mediated RNA interference and is required for primary miRNA processing. In the CBC complex, CBP20 recognizes and binds capped RNAs (m7GpppG-capped RNA) but requires ABH1/CBP80 to stabilize the movement of its N-terminal loop and lock the CBC into a high affinity cap-binding state with the cap structure. CBP20 also plays a role in stabilization of ABH1/CBP80 and ABH1/CBP80 localization to the nucleus. The protein is Nuclear cap-binding protein subunit 2 (CBP20) of Oryza sativa subsp. japonica (Rice).